We begin with the raw amino-acid sequence, 367 residues long: MRRMLVIRWILAIHLIATQVFAERIKDIATLAGVRVNQLVGYGLVVGLSGTGDKTGTKFTEDSFANMLTQLGINVPPGVRLNSKNIAAVMVTANLSSFMKKGQTMDVNISSIGDSKSLLGGTLLLTPLKGADGRVYAMSQGNVVVSGISASGSDGSSVTVNVPSGGRIPNGATIEADIPNPFYYSNSLTYNLHTPDFTTAKRMSDAINELMGPGTAKAIDAGSVVVTAPKKLSQRVDYVSVLENIEFKPGEAMAKIIINARTGTVVISSNVIVKSAAVSHGNLVVSITETPVISQPNAFASGRTVATQQSQVNIQQKNNRAFILPKGTTLKDIVRGINAVGATPADVISILEALQQAGALSATLIVI.

The N-terminal stretch at M1–A22 is a signal peptide.

The protein belongs to the FlgI family. As to quaternary structure, the basal body constitutes a major portion of the flagellar organelle and consists of four rings (L,P,S, and M) mounted on a central rod.

It localises to the periplasm. The protein resides in the bacterial flagellum basal body. Assembles around the rod to form the L-ring and probably protects the motor/basal body from shearing forces during rotation. The polypeptide is Flagellar P-ring protein (Legionella pneumophila (strain Corby)).